The following is a 381-amino-acid chain: MVASSNTGLEREDHQRDADFNKAMHGSSAQARGGVAAMFRKGGAAKQAAVDEYFKHWDNKPAENETPEERAARQAEYATLTRHYYNLATDLYEYGWGQSFHFCRFSQGEPFYQAIARHEHYLAHQIGIKDGMKVLDVGCGVGGPAREIAKFTGAHITGLNNNNYQIERATHYAFKEGLSNQLEFVKGDFMQMSFPDNSFDAVYAIEATVHAPTLKGIYSEIFRVLKPGGVFGVYEWLMTDEYDNDNLRHREIRLGIEQGDGISNMCKVSEGIAAIHDSGFEMLHHEDLADRPDALPWYWPLAGELRYVQTVGDFFTIVRMTTWGRTIAHGLAGLLETFKLAPAGTKKTADSLALAADCLVAGGRDKLFTPMYLMVARKPAA.

Belongs to the class I-like SAM-binding methyltransferase superfamily. Erg6/SMT family.

It catalyses the reaction lanosterol + S-adenosyl-L-methionine = eburicol + S-adenosyl-L-homocysteine + H(+). It participates in steroid metabolism; ergosterol biosynthesis. Functionally, sterol 24-C-methyltransferase; part of the third module of ergosterol biosynthesis pathway that includes the late steps of the pathway. ERG6A and ERG6B methylate lanosterol at C-24 to produce eburicol. The third module or late pathway involves the ergosterol synthesis itself through consecutive reactions that mainly occur in the endoplasmic reticulum (ER) membrane. Firstly, the squalene synthase ERG9 catalyzes the condensation of 2 farnesyl pyrophosphate moieties to form squalene, which is the precursor of all steroids. Squalene synthase is crucial for balancing the incorporation of farnesyl diphosphate (FPP) into sterol and nonsterol isoprene synthesis. Secondly, squalene is converted into lanosterol by the consecutive action of the squalene epoxidase ERG1 and the lanosterol synthase ERG7. Then, the delta(24)-sterol C-methyltransferase ERG6 methylates lanosterol at C-24 to produce eburicol. Eburicol is the substrate of the sterol 14-alpha demethylase encoded by CYP51A, CYP51B and CYP51C, to yield 4,4,24-trimethyl ergosta-8,14,24(28)-trienol. CYP51B encodes the enzyme primarily responsible for sterol 14-alpha-demethylation, and plays an essential role in ascospore formation. CYP51A encodes an additional sterol 14-alpha-demethylase, induced on ergosterol depletion and responsible for the intrinsic variation in azole sensitivity. The third CYP51 isoform, CYP51C, does not encode a sterol 14-alpha-demethylase, but is required for full virulence on host wheat ears. The C-14 reductase ERG24 then reduces the C14=C15 double bond which leads to 4,4-dimethylfecosterol. A sequence of further demethylations at C-4, involving the C-4 demethylation complex containing the C-4 methylsterol oxidases ERG25, the sterol-4-alpha-carboxylate 3-dehydrogenase ERG26 and the 3-keto-steroid reductase ERG27, leads to the production of fecosterol via 4-methylfecosterol. ERG28 has a role as a scaffold to help anchor ERG25, ERG26 and ERG27 to the endoplasmic reticulum. The C-8 sterol isomerase ERG2 then catalyzes the reaction which results in unsaturation at C-7 in the B ring of sterols and thus converts fecosterol to episterol. The sterol-C5-desaturases ERG3A and ERG3BB then catalyze the introduction of a C-5 double bond in the B ring to produce 5-dehydroepisterol. The C-22 sterol desaturases ERG5A and ERG5B further convert 5-dehydroepisterol into ergosta-5,7,22,24(28)-tetraen-3beta-ol by forming the C-22(23) double bond in the sterol side chain. Finally, ergosta-5,7,22,24(28)-tetraen-3beta-ol is substrate of the C-24(28) sterol reductase ERG4 to produce ergosterol. This Gibberella zeae (strain ATCC MYA-4620 / CBS 123657 / FGSC 9075 / NRRL 31084 / PH-1) (Wheat head blight fungus) protein is Sterol 24-C-methyltransferase ERG6A (FG02783.1).